The chain runs to 386 residues: N-acetylneuraminate epimerase (386 aa).

Residues 1–29 (MGMQMKNFKKMMTLMALCLSVAITTSGYA) form the signal peptide. 7 Kelch repeats span residues 51 to 95 (VIYV…VFLN), 97 to 149 (ELYV…VKLN), 151 to 186 (TMVL…KVIY), 187 to 232 (NYFN…VMEN), 235 to 284 (LMLI…LAGA), 306 to 355 (QNYT…SYGD), and 357 to 386 (VFLI…LLIK). Catalysis depends on E241, which acts as the Proton acceptor.

The protein belongs to the NanM family. In terms of assembly, homodimer.

Its subcellular location is the periplasm. The enzyme catalyses N-acetyl-alpha-neuraminate = N-acetyl-beta-neuraminate. Functionally, converts alpha-N-acetylneuranimic acid (Neu5Ac) to the beta-anomer, accelerating the equilibrium between the alpha- and beta-anomers. Probably facilitates sialidase-negative bacteria to compete successfully for limited amounts of extracellular Neu5Ac, which is likely taken up in the beta-anomer. In addition, the rapid removal of sialic acid from solution might be advantageous to the bacterium to damp down host responses. The protein is N-acetylneuraminate epimerase of Salmonella choleraesuis (strain SC-B67).